The following is a 179-amino-acid chain: Large ribosomal subunit protein uL5 (179 aa).

The protein belongs to the universal ribosomal protein uL5 family. Part of the 50S ribosomal subunit; part of the 5S rRNA/L5/L18/L25 subcomplex. Contacts the 5S rRNA and the P site tRNA. Forms a bridge to the 30S subunit in the 70S ribosome.

Functionally, this is one of the proteins that bind and probably mediate the attachment of the 5S RNA into the large ribosomal subunit, where it forms part of the central protuberance. In the 70S ribosome it contacts protein S13 of the 30S subunit (bridge B1b), connecting the 2 subunits; this bridge is implicated in subunit movement. Contacts the P site tRNA; the 5S rRNA and some of its associated proteins might help stabilize positioning of ribosome-bound tRNAs. This Variovorax paradoxus (strain S110) protein is Large ribosomal subunit protein uL5.